We begin with the raw amino-acid sequence, 89 residues long: MAISKEKKDELIKEYARHDGDTGSPEVQIALLTSDINNLNAHLKANKQDHHSYVGLLKKIGHRRNLLRYLKNKDIQRYRDLINKLGLRR.

The protein belongs to the universal ribosomal protein uS15 family. Part of the 30S ribosomal subunit. Forms a bridge to the 50S subunit in the 70S ribosome, contacting the 23S rRNA.

In terms of biological role, one of the primary rRNA binding proteins, it binds directly to 16S rRNA where it helps nucleate assembly of the platform of the 30S subunit by binding and bridging several RNA helices of the 16S rRNA. Functionally, forms an intersubunit bridge (bridge B4) with the 23S rRNA of the 50S subunit in the ribosome. In Lactobacillus gasseri (strain ATCC 33323 / DSM 20243 / BCRC 14619 / CIP 102991 / JCM 1131 / KCTC 3163 / NCIMB 11718 / NCTC 13722 / AM63), this protein is Small ribosomal subunit protein uS15.